A 328-amino-acid chain; its full sequence is MSNHGLQMPEGVHVEEVSDSEGQFVMGPLERGYGVTIGNALRRVLLSSLRGLAITAVKIDGVQHEFSTIPGVTEDVADLILNLKEVRFKADEMQEGHLHLNLEGPGNWTAADIDEATAEYDVLNPDQHVATLAEDAVVNVDLRVGYGRGYVPSEENKREDDPIGVIAIDSIFTPIKNVNYEVKPTRVGQKIDYEELLLDVETDGSLTPEEAITQGASILRDHVSFFIQLEEEPEPVVEEQEVDEEVKRIRELLAQPVDELDLSVRSHNCLKAANIKTIGDLVRREEDEMLKFRNFGRKSLQELVEVLDERGLQFGMDVEEYLEEKKAS.

The alpha N-terminal domain (alpha-NTD) stretch occupies residues 1 to 230 (MSNHGLQMPE…DHVSFFIQLE (230 aa)). Residues 248 to 328 (RIRELLAQPV…EEYLEEKKAS (81 aa)) are alpha C-terminal domain (alpha-CTD).

This sequence belongs to the RNA polymerase alpha chain family. In terms of assembly, homodimer. The RNAP catalytic core consists of 2 alpha, 1 beta, 1 beta' and 1 omega subunit. When a sigma factor is associated with the core the holoenzyme is formed, which can initiate transcription.

The catalysed reaction is RNA(n) + a ribonucleoside 5'-triphosphate = RNA(n+1) + diphosphate. In terms of biological role, DNA-dependent RNA polymerase catalyzes the transcription of DNA into RNA using the four ribonucleoside triphosphates as substrates. The protein is DNA-directed RNA polymerase subunit alpha of Salinibacter ruber (strain DSM 13855 / M31).